The sequence spans 119 residues: Large ribosomal subunit protein bL20c (119 aa).

This sequence belongs to the bacterial ribosomal protein bL20 family.

The protein resides in the plastid. It is found in the chloroplast. In terms of biological role, binds directly to 23S ribosomal RNA and is necessary for the in vitro assembly process of the 50S ribosomal subunit. It is not involved in the protein synthesizing functions of that subunit. The chain is Large ribosomal subunit protein bL20c (rpl20) from Oryza sativa (Rice).